Here is a 207-residue protein sequence, read N- to C-terminus: dTTP/UTP pyrophosphatase (207 aa).

D87 serves as the catalytic Proton acceptor.

The protein belongs to the Maf family. YhdE subfamily. Requires a divalent metal cation as cofactor.

It is found in the cytoplasm. The catalysed reaction is dTTP + H2O = dTMP + diphosphate + H(+). It catalyses the reaction UTP + H2O = UMP + diphosphate + H(+). Its function is as follows. Nucleoside triphosphate pyrophosphatase that hydrolyzes dTTP and UTP. May have a dual role in cell division arrest and in preventing the incorporation of modified nucleotides into cellular nucleic acids. This is dTTP/UTP pyrophosphatase from Nitrosomonas europaea (strain ATCC 19718 / CIP 103999 / KCTC 2705 / NBRC 14298).